The following is a 214-amino-acid chain: Adenylate kinase (214 aa).

Position 10–15 (10–15 (GAGKGT)) interacts with ATP. The interval 30–59 (STGDMFRDHKARGTEIGKQVQAIMDAGGLV) is NMP. AMP-binding positions include threonine 31, arginine 36, 57–59 (GLV), 85–88 (GYPR), and glutamine 92. The LID stretch occupies residues 126–163 (GRRSCPRCGAVYHVSQNPPHRAGFCDRDDTALVQREDD). Arginine 127 is an ATP binding site. Zn(2+) contacts are provided by cysteine 130 and cysteine 133. 136–137 (VY) contacts ATP. Residues cysteine 150 and aspartate 153 each contribute to the Zn(2+) site. The AMP site is built by arginine 160 and arginine 171. Glycine 199 lines the ATP pocket.

This sequence belongs to the adenylate kinase family. Monomer.

It is found in the cytoplasm. It carries out the reaction AMP + ATP = 2 ADP. The protein operates within purine metabolism; AMP biosynthesis via salvage pathway; AMP from ADP: step 1/1. In terms of biological role, catalyzes the reversible transfer of the terminal phosphate group between ATP and AMP. Plays an important role in cellular energy homeostasis and in adenine nucleotide metabolism. The sequence is that of Adenylate kinase from Anaeromyxobacter sp. (strain K).